We begin with the raw amino-acid sequence, 142 residues long: MGLTLSGRYISLFLAVQIAYLLQAVRAAGKCGTVFKGFSDCLLQLGENMANYPQELDEKENLQTICTYWDDFHSCATTALADCQEGATDLWEKLKKESRNLDFRGSLFELCAGGNGAIRSSVPFGVTLLITALSALVTWMQF.

An N-terminal signal peptide occupies residues Met1–Ala27. The GPI-anchor amidated alanine moiety is linked to residue Ala112. The propeptide at Gly113–Phe142 is removed in mature form.

The protein belongs to the neuritin family.

It localises to the cell membrane. It is found in the synapse. Modulates postsynaptic dendritic arbor elaboration and synaptic maturation. In Danio rerio (Zebrafish), this protein is Neuritin (nrn1).